The primary structure comprises 92 residues: Protein S100-B (92 aa).

Ser2 carries the N-acetylserine modification. 2 consecutive EF-hand domains span residues 13 to 48 (DVFH…LEEI) and 49 to 84 (KEQE…VTTA). A Zn(2+)-binding site is contributed by His16. Residues Ser19 and Glu22 each coordinate Ca(2+). A Zn(2+)-binding site is contributed by His26. Ca(2+)-binding residues include Lys27, Glu32, Asp62, Asp64, Asp66, Glu68, and Glu73. His86 and His91 together coordinate Zn(2+).

This sequence belongs to the S-100 family. In terms of assembly, dimer of either two alpha chains, or two beta chains, or one alpha and one beta chain. The S100B dimer binds two molecules of STK38. Interacts with CACYBP in a calcium-dependent manner. Interacts with ATAD3A; this interaction probably occurs in the cytosol prior to ATAD3A mitochondrial targeting. Interacts with S100A6. The S100B dimer interacts with two molecules of CAPZA1. Interacts with AGER. Interacts with PPP5C (via TPR repeats); the interaction is calcium-dependent and modulates PPP5C activity. Interacts with TPPP; this interaction inhibits TPPP dimerization. Interacts with isoform CLSTN3beta of CLSTN3; interaction promotes secretion. Although predominant among the water-soluble brain proteins, S100 is also found in a variety of other tissues.

Its subcellular location is the cytoplasm. The protein localises to the nucleus. The protein resides in the secreted. Small zinc- and- and calcium-binding protein that is highly expressed in astrocytes and constitutes one of the most abundant soluble proteins in brain. Weakly binds calcium but binds zinc very tightly-distinct binding sites with different affinities exist for both ions on each monomer. Physiological concentrations of potassium ion antagonize the binding of both divalent cations, especially affecting high-affinity calcium-binding sites. Acts as a neurotrophic factor that promotes astrocytosis and axonal proliferation. Involved in innervation of thermogenic adipose tissue by acting as an adipocyte-derived neurotrophic factor that promotes sympathetic innervation of adipose tissue. Binds to and initiates the activation of STK38 by releasing autoinhibitory intramolecular interactions within the kinase. Interaction with AGER after myocardial infarction may play a role in myocyte apoptosis by activating ERK1/2 and p53/TP53 signaling. Could assist ATAD3A cytoplasmic processing, preventing aggregation and favoring mitochondrial localization. May mediate calcium-dependent regulation on many physiological processes by interacting with other proteins, such as TPR-containing proteins, and modulating their activity. The protein is Protein S100-B of Rattus norvegicus (Rat).